Here is a 519-residue protein sequence, read N- to C-terminus: Tetratricopeptide repeat protein 31 (519 aa).

Residues 147 to 197 (QKLLVTEEEANRLAEELVAEEERMKQKAEKKRLKKKRQKERKRQERLEQYC) are a coiled coil. The segment covering 175–187 (EKKRLKKKRQKER) has biased composition (basic residues). 2 disordered regions span residues 175–230 (EKKR…EEDS) and 253–294 (RREK…VQAS). A Phosphoserine modification is found at Ser278. TPR repeat units lie at residues 305 to 338 (SQEL…NPQD), 339 to 372 (HRLF…RPGW), and 373 to 406 (PRGL…GSQP). Residues 474–506 (PSCHRSHPNQPLSQTQSRRPHPLKPQDPSKGWD) form a disordered region. A compositionally biased stretch (polar residues) spans 481 to 490 (PNQPLSQTQS).

In Homo sapiens (Human), this protein is Tetratricopeptide repeat protein 31 (TTC31).